We begin with the raw amino-acid sequence, 260 residues long: MVLKELRQKRPLVHNITNYVAAQFVANGLLALGASPLMSDAIDEMQDLAKISDALAINIGTINERAILCAKEAIKHYKALNKPIVLDPVGCSASALRHDTSLELLKSGGISALRGNAAELGSLVGISCESKGLDSQDANTPVEIIKRVAQKYFVIAVMTGKTDYVSDGKKVLSITGGSEYLALITGAGCLHTAACASFLGLKKDPLDSMAQLCALYKQASFNAQKKALENNGSNGSFLFYFLDALSLPIKLENSLIKEVL.

Residue Met-38 participates in substrate binding. 2 residues coordinate ATP: Arg-114 and Thr-159. Gly-186 contacts substrate.

This sequence belongs to the Thz kinase family. Requires Mg(2+) as cofactor.

It catalyses the reaction 5-(2-hydroxyethyl)-4-methylthiazole + ATP = 4-methyl-5-(2-phosphooxyethyl)-thiazole + ADP + H(+). It participates in cofactor biosynthesis; thiamine diphosphate biosynthesis; 4-methyl-5-(2-phosphoethyl)-thiazole from 5-(2-hydroxyethyl)-4-methylthiazole: step 1/1. Its function is as follows. Catalyzes the phosphorylation of the hydroxyl group of 4-methyl-5-beta-hydroxyethylthiazole (THZ). The polypeptide is Hydroxyethylthiazole kinase (Helicobacter pylori (strain HPAG1)).